Here is a 799-residue protein sequence, read N- to C-terminus: High affinity nerve growth factor receptor (799 aa).

An N-terminal signal peptide occupies residues 1-32 (MLRGQRHGQLGWHRPAAGLGGLVTSLMLACAC). At 33–418 (AASCRETCCP…DPVEKKDETP (386 aa)) the chain is on the extracellular side. 2 disulfide bridges follow: Cys36-Cys41 and Cys40-Cys50. An N-linked (GlcNAc...) asparagine glycan is attached at Asn67. 2 LRR repeats span residues 90–113 (LGELRSLTIVKSGLRFVAPDAFHF) and 116–137 (RLSHLNLSSNALESLSWKTVQG). Residues Asn121, Asn190, Asn204, Asn255, Asn264, Asn320, Asn325, Asn341, Asn361, and Asn404 are each glycosylated (N-linked (GlcNAc...) asparagine). Residues 148 to 219 (NPLHCSCALL…GDDVFLQCQV (72 aa)) enclose the LRRCT domain. Cys154 and Cys193 are joined by a disulfide. Ig-like C2-type domains are found at residues 196–285 (PSVK…VSVS) and 295–368 (AVEQ…LAAN). 2 disulfides stabilise this stretch: Cys217–Cys267 and Cys302–Cys348. A helical membrane pass occupies residues 419–442 (FGVSVAVGLAVSAALFLSALLLVL). Over 443–799 (NKCGQRSKFG…APPSYLDVLG (357 aa)) the chain is Cytoplasmic. The tract at residues 472 to 493 (MTLGGSSLSPTEGKGSGLQGHI) is interaction with SQSTM1. Tyr499 carries the post-translational modification Phosphotyrosine; by autocatalysis. In terms of domain architecture, Protein kinase spans 513 to 784 (IILKWELGEG…LSMKDVHARL (272 aa)). Residues 519–527 (LGEGAFGKV) and Lys547 contribute to the ATP site. The Proton acceptor role is filled by Asp653. 4 positions are modified to phosphotyrosine; by autocatalysis: Tyr679, Tyr683, Tyr684, and Tyr794.

Belongs to the protein kinase superfamily. Tyr protein kinase family. Insulin receptor subfamily. Exists in a dynamic equilibrium between monomeric (low affinity) and dimeric (high affinity) structures. Homodimerization is induced by binding of a NGF dimer. Found in a complex, at least composed of KIDINS220, MAGI2, NTRK1 and RAPGEF2; the complex is mainly formed at late endosomes in a nerve growth factor (NGF)-dependent manner. Interacts with RAPGEF2; the interaction is strengthened after NGF stimulation. Interacts with SQSTM1; bridges NTRK1 to NGFR. Forms a ternary complex with NGFR and KIDINS220; this complex is affected by the expression levels of KIDINS220 and an increase in KIDINS220 expression leads to a decreased association of NGFR and NTRK1. Interacts (phosphorylated upon activation by NGF) with SHC1; mediates SHC1 phosphorylation and activation. Interacts (phosphorylated upon activation by NGF) with PLCG1; mediates PLCG1 phosphorylation and activation. Interacts (phosphorylated) with SH2B1 and SH2B2. Interacts with GRB2. Interacts with PIK3R1. Interacts with FRS2. Interacts with SORT1; may regulate NTRK1 anterograde axonal transport. Interacts with SH2D1A; regulates NTRK1. Interacts with NRADD. Interacts with RAB7A. Interacts with PTPRS. Interacts with USP36; USP36 does not deubiquitinate NTRK1. Interacts with GGA3. Interacts with TSPAN1; this interaction promotes NTRK1 stability. Post-translationally, ligand-mediated autophosphorylation. Interaction with SQSTM1 is phosphotyrosine-dependent. Autophosphorylation at Tyr-499 mediates interaction and phosphorylation of SHC1. N-glycosylated. In terms of processing, ubiquitinated. Undergoes polyubiquitination upon activation; regulated by NGFR. Ubiquitination by NEDD4L leads to degradation. Ubiquitination regulates the internalization of the receptor. As to expression, isoform Trka-II is primarily expressed in neuronal cells; isoform Trka-I is found in non-neuronal tissues.

The protein resides in the cell membrane. Its subcellular location is the early endosome membrane. It is found in the late endosome membrane. The protein localises to the recycling endosome membrane. It carries out the reaction L-tyrosyl-[protein] + ATP = O-phospho-L-tyrosyl-[protein] + ADP + H(+). With respect to regulation, the pro-survival signaling effect of NTRK1 in neurons requires its endocytosis into signaling early endosomes and its retrograde axonal transport. This is regulated by different proteins including CFL1, RAC1 and SORT1. NTF3 is unable to induce this signaling probably due to the lability of the NTF3-NTRK1 complex in endosomes. SH2D1A inhibits the autophosphorylation of the receptor, and alters the recruitment and activation of downstream effectors and signaling cascades. Regulated by NGFR. Receptor tyrosine kinase involved in the development and the maturation of the central and peripheral nervous systems through regulation of proliferation, differentiation and survival of sympathetic and nervous neurons. High affinity receptor for NGF which is its primary ligand. Can also bind and be activated by NTF3/neurotrophin-3. However, NTF3 only supports axonal extension through NTRK1 but has no effect on neuron survival. Upon dimeric NGF ligand-binding, undergoes homodimerization, autophosphorylation and activation. Recruits, phosphorylates and/or activates several downstream effectors including SHC1, FRS2, SH2B1, SH2B2 and PLCG1 that regulate distinct overlapping signaling cascades driving cell survival and differentiation. Through SHC1 and FRS2 activates a GRB2-Ras-MAPK cascade that regulates cell differentiation and survival. Through PLCG1 controls NF-Kappa-B activation and the transcription of genes involved in cell survival. Through SHC1 and SH2B1 controls a Ras-PI3 kinase-AKT1 signaling cascade that is also regulating survival. In absence of ligand and activation, may promote cell death, making the survival of neurons dependent on trophic factors. This is High affinity nerve growth factor receptor (Ntrk1) from Rattus norvegicus (Rat).